We begin with the raw amino-acid sequence, 240 residues long: Large ribosomal subunit protein uL2 (240 aa).

A compositionally biased stretch (polar residues) spans 1–11 (MGKRLISQNRG). Disordered regions lie at residues 1 to 28 (MGKRLISQNRGRGTPKYRSPTHKRKGAV) and 206 to 240 (GGGRHQHLGKPSSVSRHTSPGRKVGHIASRRTGRK). 2 stretches are compositionally biased toward basic residues: residues 13 to 28 (GTPKYRSPTHKRKGAV) and 224 to 240 (SPGRKVGHIASRRTGRK).

The protein belongs to the universal ribosomal protein uL2 family. As to quaternary structure, part of the 50S ribosomal subunit. Forms a bridge to the 30S subunit in the 70S ribosome.

One of the primary rRNA binding proteins. Required for association of the 30S and 50S subunits to form the 70S ribosome, for tRNA binding and peptide bond formation. It has been suggested to have peptidyltransferase activity; this is somewhat controversial. Makes several contacts with the 16S rRNA in the 70S ribosome. The protein is Large ribosomal subunit protein uL2 of Methanococcus maripaludis (strain C7 / ATCC BAA-1331).